Consider the following 262-residue polypeptide: Ornithine carbamoyltransferase (262 aa).

Residues 3 to 7 (STRTR), Gln-30, Arg-54, and 81 to 84 (HPTQ) each bind carbamoyl phosphate. Residues Asn-114, Asp-178, and 182 to 183 (SM) contribute to the L-ornithine site. Residues 219 to 222 (HCLP) and Thr-247 each bind carbamoyl phosphate.

It belongs to the aspartate/ornithine carbamoyltransferase superfamily. OTCase family.

It is found in the cytoplasm. It carries out the reaction carbamoyl phosphate + L-ornithine = L-citrulline + phosphate + H(+). It functions in the pathway amino-acid biosynthesis; L-arginine biosynthesis; L-arginine from L-ornithine and carbamoyl phosphate: step 1/3. The protein is Ornithine carbamoyltransferase (argF) of Neisseria cinerea.